The primary structure comprises 313 residues: MGCRCCKMIQSYLFDPVQVPSPGFVNEVNNCKLEEDDTVRLKGTQNSEVEVPRNALHDGSLSNSESRGSTTGLPHQGPLPQEDSEERPCVEKQGIVNGISPTATLQSVRSSRLHQVDNSSWASSPWVATIDSAHLAQPFLEGEDYRKQSCLLPTLEGTQMVGHGDCRAPAEALAVADHIPYIPAPDYPQLWSPTVDNADPEEKDCLFENHSEVEPLPGIQPRVSQLGLNVPFSLQRSWDSLNEAGTTEVLSDYFKEEGPTHPTPAADSGSEREDPHTYNGDREGVVVDEDAEVAEALAALEAATAGEDADDAD.

Residues 40–89 (RLKGTQNSEVEVPRNALHDGSLSNSESRGSTTGLPHQGPLPQEDSEERPC) form a disordered region. A phosphoserine mark is found at S60 and S64. A compositionally biased stretch (polar residues) spans 60–73 (SLSNSESRGSTTGL). At T104 the chain carries Phosphothreonine. Phosphoserine occurs at positions 107, 237, and 240. The interval 253–286 (YFKEEGPTHPTPAADSGSEREDPHTYNGDREGVV) is disordered. A compositionally biased stretch (basic and acidic residues) spans 269-285 (GSEREDPHTYNGDREGV).

In terms of assembly, interacts with KEAP1; this interaction prevents the ubiquitination of KEAP1 by TRIM25, thus protecting KEAP1 from degradation. Found in association with PDCD10 and members of the STE20 kinases, such as STK24, STK25 and STK26.

Its subcellular location is the cell membrane. Functionally, acts as a tumor suppressor. Acts as a tumor suppressor for colorectal cancer cell proliferation by targeting KEAP1/USP17/ELK1/CDK6 axis. The polypeptide is PDCD10 and GCKIII kinases-associated protein 1 (Mus musculus (Mouse)).